Reading from the N-terminus, the 321-residue chain is NADPH-dependent codeinone reductase 1-3 (321 aa).

NADPH is bound by residues Thr27 and Asp51. Catalysis depends on proton donor residues Tyr56 and His119. His119 is a substrate binding site. Positions 187, 214, 216, 264, and 269 each coordinate NADPH. Positions 300–321 (ADFLLSPTGPFKTEEEFWDEKD) are disordered.

This sequence belongs to the aldo/keto reductase family. Latex secreting cells (laticifer cells). Expressed constitutively in all organs with highest levels in capsules. Restricted to the parietal region of sieve elements adjacent or proximal to laticifers in roots, stems, leaves and carpels.

The protein localises to the cytoplasm. Its subcellular location is the cytosol. The enzyme catalyses codeine + NADP(+) = codeinone + NADPH + H(+). It carries out the reaction neopine + NADP(+) = neopinone + NADPH + H(+). It catalyses the reaction morphine + NADP(+) = morphinone + NADPH + H(+). The catalysed reaction is neomorphine + NADP(+) = neomorphinone + NADPH + H(+). It functions in the pathway alkaloid biosynthesis; morphine biosynthesis. In terms of biological role, NADPH-dependent codeinone reductase involved in biosynthesis of morphinan-type benzylisoquinoline and opiate alkaloids natural products. Reduces codeinone to codeine in the penultimate step in morphine biosynthesis. Can use morphinone, hydrocodone and hydromorphone as substrate during reductive reaction with NADPH as cofactor, and morphine and dihydrocodeine as substrate during oxidative reaction with NADP as cofactor. Converts morphinone to morphine, and neomorphinone to neomorphine. Reduces irreversibly neopinone, a spontaneous isomer of codeinone, to neopine; in planta, neopine levels are limited to low levels. The polypeptide is NADPH-dependent codeinone reductase 1-3 (Papaver somniferum (Opium poppy)).